The following is a 419-amino-acid chain: MGEKKPEPLDFVKDFQEYLTQQTHHVNMISGSVSGDKEAEALQGAGTDGDQNGLDHPSVEVSLDENSGMLVDGFERTFDGKLKCRYCNYASKGTARLIEHIRIHTGEKPHRCHLCPFASAYERHLEAHMRSHTGEKPYKCELCSFRCSDRSNLSHHRRRKHKMVPIKGTRSSLSSKKMWGVLQKKTSNLGYSRRALINLSPPSMVVQKPDYLNDFTHEIPNIQTDSYESMAKTTPTGGLPRDPQELMVDNPLNQLSTLAGQLSSLPPENQNPASPDVVPCPDEKPFMIQQPSTQAVVSAVSASIPQSSSPTSPEPRPSHSQRNYSPVAGPSSEPSAHTSTPSIGNSQPSTPAPALPVQDPQLLHHCQHCDMYFADNILYTIHMGCHGYENPFQCNICGCKCKNKYDFACHFARGQHNQH.

Lys5 is covalently cross-linked (Glycyl lysine isopeptide (Lys-Gly) (interchain with G-Cter in SUMO2)). 3 C2H2-type zinc fingers span residues 82-104 (LKCRYCNYASKGTARLIEHIRIH), 110-132 (HRCHLCPFASAYERHLEAHMRSH), and 138-161 (YKCELCSFRCSDRSNLSHHRRRKH). Lys185 participates in a covalent cross-link: Glycyl lysine isopeptide (Lys-Gly) (interchain with G-Cter in SUMO2). Composition is skewed to polar residues over residues 223 to 236 (QTDSYESMAKTTPT) and 262 to 273 (LSSLPPENQNPA). 2 disordered regions span residues 223-247 (QTDSYESMAKTTPTGGLPRDPQELM) and 262-356 (LSSL…PALP). The segment covering 290–311 (QPSTQAVVSAVSASIPQSSSPT) has biased composition (low complexity). Over residues 332–349 (SEPSAHTSTPSIGNSQPS) the composition is skewed to polar residues. C2H2-type zinc fingers lie at residues 364 to 386 (HHCQHCDMYFADNILYTIHMGCH) and 392 to 416 (FQCNICGCKCKNKYDFACHFARGQH).

Belongs to the Ikaros C2H2-type zinc-finger protein family. Self-associates. Interacts with other family members; IKZF1, IKZF2, IKZF3 and IKZF4. In terms of tissue distribution, expressed in brain, heart, skeletal muscle, kidney, and liver. Expressed in the hematopoietic cell lines MOLT-4, NALM-6 and K-562. Highly expressed in THP-1 and M-07e cell lines, which have characteristics of myeloid and early megakaryocytic cells respectively.

Its subcellular location is the nucleus. In terms of biological role, transcriptional repressor that binds the core 5'GNNTGTNG-3' DNA consensus sequence. Involved in megakaryocyte differentiation. The protein is Zinc finger protein Pegasus (IKZF5) of Homo sapiens (Human).